The sequence spans 221 residues: MHGVVVVELKGYREWTESLGPRREHIIQQVQSRIQAAVWRSFTAVGALPHHFRYDFYIALVNGVSLDLVKRAVEKAARASPVGAGFCLGVGETPYEAYLRCGGGGGGAASPAVVAHMDVINSTEATRRNGPLDVYLKVVKLLGQLGERCKDLGCMAFYLGGDNIALFLPSPNAIYSILDGVDLRVRVGVGVAKRPYNAFVRATWALDRLRSAGREGVEVVK.

It belongs to the archaeal-type GTP cyclohydrolase family.

It catalyses the reaction GTP + 3 H2O = 2-amino-5-formylamino-6-(5-phospho-D-ribosylamino)pyrimidin-4(3H)-one + 2 phosphate + 2 H(+). Catalyzes the formation of 2-amino-5-formylamino-6-ribofuranosylamino-4(3H)-pyrimidinone ribonucleotide monophosphate and inorganic phosphate from GTP. Also has an independent pyrophosphate phosphohydrolase activity. The sequence is that of GTP cyclohydrolase III from Pyrobaculum neutrophilum (strain DSM 2338 / JCM 9278 / NBRC 100436 / V24Sta) (Thermoproteus neutrophilus).